We begin with the raw amino-acid sequence, 285 residues long: RNA polymerase sigma factor RpoH (285 aa).

The tract at residues 53 to 122 (LILSHLRFVV…IHEYVLRNWR (70 aa)) is sigma-70 factor domain-2. Positions 77 to 80 (DLVQ) match the Interaction with polymerase core subunit RpoC motif. A sigma-70 factor domain-4 region spans residues 229-280 (ALASLDERSQHIVRSRWLDDDKATLQDLAEMYGVSAERIRQLEKNAMKKLKM). A DNA-binding region (H-T-H motif) is located at residues 253-272 (LQDLAEMYGVSAERIRQLEK).

The protein belongs to the sigma-70 factor family. RpoH subfamily. Interacts with the RNA polymerase core enzyme.

Its subcellular location is the cytoplasm. In terms of biological role, sigma factors are initiation factors that promote the attachment of RNA polymerase to specific initiation sites and are then released. This sigma factor is involved in regulation of expression of heat shock genes. The chain is RNA polymerase sigma factor RpoH from Vibrio vulnificus (strain CMCP6).